The sequence spans 514 residues: tRNA-2-methylthio-N(6)-dimethylallyladenosine synthase (514 aa).

Residues 68-186 (RTFLIKTYGC…LPEILEEAYL (119 aa)) form the MTTase N-terminal domain. Residues cysteine 77, cysteine 113, cysteine 147, cysteine 223, cysteine 227, and cysteine 230 each contribute to the [4Fe-4S] cluster site. A Radical SAM core domain is found at 209-439 (RDGHIKAWVN…NKKVGIYSQQ (231 aa)). A TRAM domain is found at 442–505 (SQYEGKIVTV…QYSLNGTFIQ (64 aa)).

It belongs to the methylthiotransferase family. MiaB subfamily. In terms of assembly, monomer. [4Fe-4S] cluster is required as a cofactor.

The protein localises to the cytoplasm. The enzyme catalyses N(6)-dimethylallyladenosine(37) in tRNA + (sulfur carrier)-SH + AH2 + 2 S-adenosyl-L-methionine = 2-methylsulfanyl-N(6)-dimethylallyladenosine(37) in tRNA + (sulfur carrier)-H + 5'-deoxyadenosine + L-methionine + A + S-adenosyl-L-homocysteine + 2 H(+). Its function is as follows. Catalyzes the methylthiolation of N6-(dimethylallyl)adenosine (i(6)A), leading to the formation of 2-methylthio-N6-(dimethylallyl)adenosine (ms(2)i(6)A) at position 37 in tRNAs that read codons beginning with uridine. The chain is tRNA-2-methylthio-N(6)-dimethylallyladenosine synthase from Staphylococcus epidermidis (strain ATCC 35984 / DSM 28319 / BCRC 17069 / CCUG 31568 / BM 3577 / RP62A).